A 345-amino-acid polypeptide reads, in one-letter code: Ferrochelatase (345 aa).

Residues H215 and E296 each contribute to the Fe cation site.

It belongs to the ferrochelatase family.

It localises to the cytoplasm. The catalysed reaction is heme b + 2 H(+) = protoporphyrin IX + Fe(2+). It functions in the pathway porphyrin-containing compound metabolism; protoheme biosynthesis; protoheme from protoporphyrin-IX: step 1/1. Catalyzes the ferrous insertion into protoporphyrin IX. Essential for normal nodule development. The chain is Ferrochelatase from Bradyrhizobium diazoefficiens (strain JCM 10833 / BCRC 13528 / IAM 13628 / NBRC 14792 / USDA 110).